Here is a 335-residue protein sequence, read N- to C-terminus: Homeobox protein DBX1 (335 aa).

Disordered regions lie at residues 56-102 (RSIP…LSPA) and 240-335 (KERE…ITVS). A compositionally biased stretch (low complexity) spans 83 to 95 (GSPGSGSRRGSSP). Positions 181 to 240 (GMLRRAVFSDVQRKALEKTFQKQKYISKPDRKKLASKLGLKDSQVKIWFQNRRMKWRNSK) form a DNA-binding region, homeobox. The span at 299–317 (GPLPASPAHSSSPGKPSDF) shows a compositional bias: low complexity. Residues 318 to 335 (SDSDEDEEGEEDEEITVS) show a composition bias toward acidic residues.

It belongs to the H2.0 homeobox family.

The protein localises to the nucleus. In terms of biological role, could have a role in patterning the central nervous system during embryogenesis. Has a key role in regulating the distinct phenotypic features that distinguish two major classes of ventral interneurons, V0 and V1 neurons. Regulates the transcription factor profile, neurotransmitter phenotype, intraspinal migratory path and axonal trajectory of V0 neurons, features that differentiate them from an adjacent set of V1 neurons. This is Homeobox protein DBX1 (Dbx1) from Rattus norvegicus (Rat).